A 245-amino-acid polypeptide reads, in one-letter code: Thiopurine S-methyltransferase (245 aa).

An S-adenosyl-L-methionine-binding site is contributed by 29–40; that stretch reads WQEKWVSRRIGF. Phe-40 contacts substrate. An N6-acetyllysine modification is found at Lys-58. S-adenosyl-L-methionine contacts are provided by Leu-69, Glu-90, and Arg-152.

It belongs to the class I-like SAM-binding methyltransferase superfamily. TPMT family. Monomer.

It localises to the cytoplasm. The catalysed reaction is S-adenosyl-L-methionine + a thiopurine = S-adenosyl-L-homocysteine + a thiopurine S-methylether.. The protein is Thiopurine S-methyltransferase (TPMT) of Lycaon pictus (African wild dog).